The following is a 474-amino-acid chain: tRNA-2-methylthio-N(6)-dimethylallyladenosine synthase (474 aa).

The MTTase N-terminal domain maps to Lys-3–Gly-120. Cys-12, Cys-49, Cys-83, Cys-157, Cys-161, and Cys-164 together coordinate [4Fe-4S] cluster. In terms of domain architecture, Radical SAM core spans Arg-143–Ala-375. The TRAM domain occupies Arg-378–Arg-441.

It belongs to the methylthiotransferase family. MiaB subfamily. Monomer. [4Fe-4S] cluster serves as cofactor.

The protein resides in the cytoplasm. It carries out the reaction N(6)-dimethylallyladenosine(37) in tRNA + (sulfur carrier)-SH + AH2 + 2 S-adenosyl-L-methionine = 2-methylsulfanyl-N(6)-dimethylallyladenosine(37) in tRNA + (sulfur carrier)-H + 5'-deoxyadenosine + L-methionine + A + S-adenosyl-L-homocysteine + 2 H(+). Catalyzes the methylthiolation of N6-(dimethylallyl)adenosine (i(6)A), leading to the formation of 2-methylthio-N6-(dimethylallyl)adenosine (ms(2)i(6)A) at position 37 in tRNAs that read codons beginning with uridine. This is tRNA-2-methylthio-N(6)-dimethylallyladenosine synthase from Escherichia coli (strain UTI89 / UPEC).